A 407-amino-acid chain; its full sequence is Peptidase T (407 aa).

Residue His-77 coordinates Zn(2+). Residue Asp-79 is part of the active site. Residue Asp-140 coordinates Zn(2+). The Proton acceptor role is filled by Glu-174. Zn(2+) contacts are provided by Glu-175, Asp-197, and His-379.

It belongs to the peptidase M20B family. The cofactor is Zn(2+).

It is found in the cytoplasm. It carries out the reaction Release of the N-terminal residue from a tripeptide.. Its function is as follows. Cleaves the N-terminal amino acid of tripeptides. In Bacteroides fragilis (strain YCH46), this protein is Peptidase T.